The primary structure comprises 460 residues: UDP-N-acetylmuramoylalanine--D-glutamate ligase (460 aa).

G115–T121 contacts ATP.

The protein belongs to the MurCDEF family.

It is found in the cytoplasm. The enzyme catalyses UDP-N-acetyl-alpha-D-muramoyl-L-alanine + D-glutamate + ATP = UDP-N-acetyl-alpha-D-muramoyl-L-alanyl-D-glutamate + ADP + phosphate + H(+). It participates in cell wall biogenesis; peptidoglycan biosynthesis. Cell wall formation. Catalyzes the addition of glutamate to the nucleotide precursor UDP-N-acetylmuramoyl-L-alanine (UMA). This is UDP-N-acetylmuramoylalanine--D-glutamate ligase from Salinibacter ruber (strain DSM 13855 / M31).